The chain runs to 386 residues: Patatin-04/09 (386 aa).

A signal peptide spans 1 to 23; sequence MATTKSFLILFFMILATTSSTCA. The region spanning 32-229 is the PNPLA domain; it reads LSIDGGGIKG…TVGDPALLSL (198 aa). The GXGXXG motif lies at 36–41; it reads GGGIKG. Positions 75–79 match the GXSXG motif; the sequence is GTSTG. Ser-77 (nucleophile) is an active-site residue. The N-linked (GlcNAc...) asparagine glycan is linked to Asn-115. The active-site Proton acceptor is Asp-215. Positions 215 to 217 match the DGA/G motif; it reads DGG. Residues 321–384 are a coiled coil; sequence ENALNGTTTE…DRKKLRANKA (64 aa). N-linked (GlcNAc...) asparagine glycosylation occurs at Asn-325.

Belongs to the patatin family. As to expression, tuber.

It localises to the vacuole. Its function is as follows. Probable lipolytic acyl hydrolase (LAH), an activity which is thought to be involved in the response of tubers to pathogens. The sequence is that of Patatin-04/09 from Solanum tuberosum (Potato).